The chain runs to 151 residues: Transcriptional regulator MraZ (151 aa).

SpoVT-AbrB domains follow at residues 5–52 (ANAI…PLDE) and 81–124 (AVDL…DEDA).

Belongs to the MraZ family. In terms of assembly, forms oligomers.

The protein localises to the cytoplasm. The protein resides in the nucleoid. The protein is Transcriptional regulator MraZ of Pseudomonas fluorescens (strain ATCC BAA-477 / NRRL B-23932 / Pf-5).